Here is a 355-residue protein sequence, read N- to C-terminus: MTALKNDRFLRALLKQPVDVTPVWMMRQAGRYLPEYRASRAQAGDFMSLCMNPEFACEVTLQPLDRYPQLDAAILFSDILTIPDAMGQGLYFETGEGPRFKKVVSTLADIEALPIPDPHKDLGYVMDAVSTIRRELNGRVPLIGFSGSPWTLATYMVEGGSSKDFRKTKAMLYDNPQAMHLLLDKLAQSVTSYLNGQIQAGAQAVQIFDTWGGNLSAAAYQEFSLAYMKKIVSGLIREHDGRKVPVILFTKNGGLWLESIAEAGADALGLDWTCDIGNARARVGDKVALQGNMDPTVLYAKPEAIRTEVGRILASYGKGSGHVFNLGHGITPEVDPEHAGAFLRAVHELSAQYHE.

Residues 27–31, aspartate 78, tyrosine 155, threonine 210, and histidine 328 each bind substrate; that span reads RQAGR.

It belongs to the uroporphyrinogen decarboxylase family. In terms of assembly, homodimer.

Its subcellular location is the cytoplasm. It carries out the reaction uroporphyrinogen III + 4 H(+) = coproporphyrinogen III + 4 CO2. It participates in porphyrin-containing compound metabolism; protoporphyrin-IX biosynthesis; coproporphyrinogen-III from 5-aminolevulinate: step 4/4. In terms of biological role, catalyzes the decarboxylation of four acetate groups of uroporphyrinogen-III to yield coproporphyrinogen-III. This Pseudomonas fluorescens (strain Pf0-1) protein is Uroporphyrinogen decarboxylase.